The chain runs to 691 residues: Elongation factor G (691 aa).

Positions 12–286 (NKLRNIGIMA…GIVRYLPSPL (275 aa)) constitute a tr-type G domain. GTP contacts are provided by residues 21 to 28 (AHIDAGKT), 85 to 89 (DTPGH), and 139 to 142 (NKMD).

This sequence belongs to the TRAFAC class translation factor GTPase superfamily. Classic translation factor GTPase family. EF-G/EF-2 subfamily.

The protein localises to the cytoplasm. Catalyzes the GTP-dependent ribosomal translocation step during translation elongation. During this step, the ribosome changes from the pre-translocational (PRE) to the post-translocational (POST) state as the newly formed A-site-bound peptidyl-tRNA and P-site-bound deacylated tRNA move to the P and E sites, respectively. Catalyzes the coordinated movement of the two tRNA molecules, the mRNA and conformational changes in the ribosome. The polypeptide is Elongation factor G (Fervidobacterium nodosum (strain ATCC 35602 / DSM 5306 / Rt17-B1)).